Consider the following 578-residue polypeptide: Arginine--tRNA ligase (578 aa).

A 'HIGH' region motif is present at residues 122-132; that stretch reads PNLAKEMHVGH.

This sequence belongs to the class-I aminoacyl-tRNA synthetase family. Monomer.

The protein localises to the cytoplasm. It carries out the reaction tRNA(Arg) + L-arginine + ATP = L-arginyl-tRNA(Arg) + AMP + diphosphate. In Pseudoalteromonas atlantica (strain T6c / ATCC BAA-1087), this protein is Arginine--tRNA ligase.